We begin with the raw amino-acid sequence, 365 residues long: Chorismate synthase (365 aa).

NADP(+) contacts are provided by R48 and R54. FMN-binding positions include 131 to 133 (RSS), 243 to 244 (NA), G288, 303 to 307 (KPTSS), and R329.

The protein belongs to the chorismate synthase family. In terms of assembly, homotetramer. FMNH2 serves as cofactor.

The catalysed reaction is 5-O-(1-carboxyvinyl)-3-phosphoshikimate = chorismate + phosphate. Its pathway is metabolic intermediate biosynthesis; chorismate biosynthesis; chorismate from D-erythrose 4-phosphate and phosphoenolpyruvate: step 7/7. Catalyzes the anti-1,4-elimination of the C-3 phosphate and the C-6 proR hydrogen from 5-enolpyruvylshikimate-3-phosphate (EPSP) to yield chorismate, which is the branch point compound that serves as the starting substrate for the three terminal pathways of aromatic amino acid biosynthesis. This reaction introduces a second double bond into the aromatic ring system. The chain is Chorismate synthase from Rhizobium leguminosarum bv. trifolii (strain WSM2304).